The following is a 371-amino-acid chain: S-adenosylmethionine:tRNA ribosyltransferase-isomerase (371 aa).

This sequence belongs to the QueA family. As to quaternary structure, monomer.

It localises to the cytoplasm. The enzyme catalyses 7-aminomethyl-7-carbaguanosine(34) in tRNA + S-adenosyl-L-methionine = epoxyqueuosine(34) in tRNA + adenine + L-methionine + 2 H(+). The protein operates within tRNA modification; tRNA-queuosine biosynthesis. Its function is as follows. Transfers and isomerizes the ribose moiety from AdoMet to the 7-aminomethyl group of 7-deazaguanine (preQ1-tRNA) to give epoxyqueuosine (oQ-tRNA). This is S-adenosylmethionine:tRNA ribosyltransferase-isomerase from Nitratidesulfovibrio vulgaris (strain ATCC 29579 / DSM 644 / CCUG 34227 / NCIMB 8303 / VKM B-1760 / Hildenborough) (Desulfovibrio vulgaris).